The sequence spans 492 residues: Catalase isozyme 1 (492 aa).

Residues His-65 and Asn-138 contribute to the active site. Position 348 (Tyr-348) interacts with heme.

The protein belongs to the catalase family. In terms of assembly, homotetramer. Requires heme as cofactor.

It localises to the cytoplasm. It is found in the cytosol. The protein resides in the peroxisome matrix. The catalysed reaction is 2 H2O2 = O2 + 2 H2O. With respect to regulation, inhibited by salicylic acid. Catalyzes the degradation of hydrogen peroxide (H(2)O(2)) generated by peroxisomal oxidases to water and oxygen, thereby protecting cells from the toxic effects of hydrogen peroxide. The polypeptide is Catalase isozyme 1 (CAT-1) (Nicotiana tabacum (Common tobacco)).